We begin with the raw amino-acid sequence, 455 residues long: Phosphoglucosamine mutase (455 aa).

The Phosphoserine intermediate role is filled by Ser-108. Mg(2+) contacts are provided by Ser-108, Asp-248, Asp-250, and Asp-252. Ser-108 carries the phosphoserine modification.

The protein belongs to the phosphohexose mutase family. The cofactor is Mg(2+). Activated by phosphorylation.

The enzyme catalyses alpha-D-glucosamine 1-phosphate = D-glucosamine 6-phosphate. Catalyzes the conversion of glucosamine-6-phosphate to glucosamine-1-phosphate. The sequence is that of Phosphoglucosamine mutase from Leuconostoc mesenteroides subsp. mesenteroides (strain ATCC 8293 / DSM 20343 / BCRC 11652 / CCM 1803 / JCM 6124 / NCDO 523 / NBRC 100496 / NCIMB 8023 / NCTC 12954 / NRRL B-1118 / 37Y).